Consider the following 344-residue polypeptide: Arginine N-succinyltransferase (344 aa).

Leucine 125 lines the succinyl-CoA pocket. Histidine 229 functions as the Proton donor in the catalytic mechanism.

Belongs to the arginine N-succinyltransferase family.

The catalysed reaction is succinyl-CoA + L-arginine = N(2)-succinyl-L-arginine + CoA + H(+). It functions in the pathway amino-acid degradation; L-arginine degradation via AST pathway; L-glutamate and succinate from L-arginine: step 1/5. Catalyzes the transfer of succinyl-CoA to arginine to produce N(2)-succinylarginine. The protein is Arginine N-succinyltransferase of Salmonella typhi.